The sequence spans 1604 residues: MGAKESRIGFLSYEEALRRVTDVELKRLKDAFKRTCGLSYYMGQHCFIREVLGDGVPPKVAEVIYCSFGGTSKGLHFNNLIVGLVLLTRGKDEEKAKYIFSLFSSESGNYVIREEMERMLHVVDGKVPDTLRKCFSEGEKVNYEKFRNWLFLNKDAFTFSRWLLSGGVYVTLTDDSDTPTFYQTLAGVTHLEESDIIDLEKRYWLLKAQSRTGRFDLETFGPLVSPPIRPSLSEGLFNAFDENRDNHIDFKEISCGLSACCRGPLAERQKFCFKVFDVDRDGVLSRVELRDMVVALLEVWKDNRTDDIPELHMDLSDIVEGILNAHDTTKMGHLTLEDYQIWSVKNVLANEFLNLLFQVCHIVLGLRPATPEEEGQIIRGWLERESRYGLQAGHNWFIISMQWWQQWKEYVKYDANPVVIEPSSVLNGGKYSFGTAAHPMEQVEDRIGSSLSYVNTTEEKFSDNISTASEASETAGSGFLYSATPGADVCFARQHNTSDNNNQCLLGANGNILLHLNPQKPGAIDNQPLVTQEPVKATSLTLEGGRLKRTPQLIHGRDYEMVPEPVWRALYHWYGANLALPRPVIKNSKTDIPELELFPRYLLFLRQQPATRTQQSNIWVNMGNVPSPNAPLKRVLAYTGCFSRMQTIKEIHEYLSQRLRIKEEDMRLWLYNSENYLTLLDDEDHKLEYLKIQDEQHLVIEVRNKDMSWPEEMSFIANSSKIDRHKVPTEKGATGLSNLGNTCFMNSSIQCVSNTQPLTQYFISGRHLYELNRTNPIGMKGHMAKCYGDLVQELWSGTQKNVAPLKLRWTIAKYAPRFNGFQQQDSQELLAFLLDGLHEDLNRVHEKPYVELKDSDGRPDWEVAAEAWDNHLRRNRSIVVDLFHGQLRSQVKCKTCGHISVRFDPFNFLSLPLPMDSYMHLEITVIKLDGTTPVRYGLRLNMDEKYTGLKKQLSDLCGLNSEQILLAEVHGSNIKNFPQDNQKVRLSVSGFLCAFEIPVPVSPISASSPTQTDFSSSPSTNEMFTLTTNGDLPRPIFIPNGMPNTVVPCGTEKNFTNGMVNGHMPSLPDSPFTGYIIAVHRKMMRTELYFLSSQKNRPSLFGMPLIVPCTVHTRKKDLYDAVWIQVSRLASPLPPQEASNHAQDCDDSMGYQYPFTLRVVQKDGNSCAWCPWYRFCRGCKIDCGEDRAFIGNAYIAVDWDPTALHLRYQTSQERVVDEHESVEQSRRAQAEPINLDSCLRAFTSEEELGENEMYYCSKCKTHCLATKKLDLWRLPPILIIHLKRFQFVNGRWIKSQKIVKFPRESFDPSAFLVPRDPALCQHKPLTPQGDELSEPRILAREVKKVDAQSSAGEEDVLLSKSPSSLSANIISSPKGSPSSSRKSGTSCPSSKNSSPNSSPRTLGRSKGRLRLPQIGSKNKLSSSKENLDASKENGAGQICELADALSRGHVLGGSQPELVTPQDHEVALANGFLYEHEACGNGYSNGQLGNHSEEDSTDDQREDTRIKPIYNLYAISCHSGILGGGHYVTYAKNPNCKWYCYNDSSCKELHPDEIDTDSAYILFYEQQGIDYAQFLPKTDGKKMADTSSMDEDFESDYKKYCVLQ.

EF-hand domains follow at residues Lys91–Lys126, Ile228–Gly263, and Pro264–Val299. Residues Asp241, Asn243, Asp245, His247, Glu252, Asp277, Asp279, Asp281, and Glu288 each coordinate Ca(2+). One can recognise a DUSP domain in the interval Ala369 to Ile585. In terms of domain architecture, USP spans Thr734 to Gln1567. Cys743 serves as the catalytic Nucleophile. Tyr1173 is subject to Phosphotyrosine. 2 disordered regions span residues Lys1343–Pro1362 and Ala1367–Lys1431. Phosphoserine is present on residues Ser1350, Ser1372, Ser1376, and Ser1454. Positions Ala1367 to Pro1399 are enriched in low complexity. Residue His1526 is the Proton acceptor of the active site. At Ser1588 the chain carries Phosphoserine. A Cysteine methyl ester modification is found at Cys1601. Cys1601 is lipidated: S-farnesyl cysteine. Residues Val1602 to Gln1604 constitute a propeptide, removed in mature form.

This sequence belongs to the peptidase C19 family.

It localises to the golgi apparatus membrane. The catalysed reaction is Thiol-dependent hydrolysis of ester, thioester, amide, peptide and isopeptide bonds formed by the C-terminal Gly of ubiquitin (a 76-residue protein attached to proteins as an intracellular targeting signal).. In terms of biological role, deubiquitinase that can remove conjugated ubiquitin from target proteins, such as RAB7A and LAMTOR1. Acts as a positive regulator of the mTORC1 signaling by mediating deubiquitination of LAMTOR1, thereby promoting the association between LAMTOR1 and the lysosomal V-ATPase complex and subsequent activation of the mTORC1 complex. In Homo sapiens (Human), this protein is Ubiquitin carboxyl-terminal hydrolase 32 (USP32).